A 276-amino-acid chain; its full sequence is uncharacterized protein (276 aa).

A disordered region spans residues 1 to 20 (MMSDEQHQGGDGQTTTNTNT).

This is an uncharacterized protein from Dictyostelium discoideum (Social amoeba).